A 208-amino-acid polypeptide reads, in one-letter code: Ribosomal RNA small subunit methyltransferase G (208 aa).

S-adenosyl-L-methionine-binding positions include Gly76, Leu81, 127 to 128 (VE), and Arg142.

Belongs to the methyltransferase superfamily. RNA methyltransferase RsmG family.

Its subcellular location is the cytoplasm. The enzyme catalyses guanosine(527) in 16S rRNA + S-adenosyl-L-methionine = N(7)-methylguanosine(527) in 16S rRNA + S-adenosyl-L-homocysteine. Its function is as follows. Specifically methylates the N7 position of guanine in position 527 of 16S rRNA. The chain is Ribosomal RNA small subunit methyltransferase G from Legionella pneumophila (strain Lens).